Reading from the N-terminus, the 800-residue chain is Protein MEI2-like 5 (800 aa).

2 RRM domains span residues 168 to 241 (RTLF…FSIP) and 253 to 326 (GTLV…PSRP). 2 positions are modified to phosphoserine: serine 384 and serine 390. 2 disordered regions span residues 470-489 (GSPN…TSST) and 776-800 (VVDE…RERS). The segment covering 471–488 (SPNARSEPSSSSVWSTSS) has biased composition (low complexity). Serine 789 and serine 792 each carry phosphoserine.

Its function is as follows. Probable RNA-binding protein that plays a role in meiosis and vegetative growth. The chain is Protein MEI2-like 5 (ML5) from Arabidopsis thaliana (Mouse-ear cress).